The primary structure comprises 132 residues: Small ribosomal subunit protein uS8 (132 aa).

It belongs to the universal ribosomal protein uS8 family. In terms of assembly, part of the 30S ribosomal subunit. Contacts proteins S5 and S12.

Functionally, one of the primary rRNA binding proteins, it binds directly to 16S rRNA central domain where it helps coordinate assembly of the platform of the 30S subunit. This is Small ribosomal subunit protein uS8 from Rhizobium meliloti (strain 1021) (Ensifer meliloti).